The chain runs to 304 residues: Ribonuclease Z (304 aa).

Zn(2+) is bound by residues H63, H65, D67, H68, H141, D208, and H266. D67 (proton acceptor) is an active-site residue.

The protein belongs to the RNase Z family. In terms of assembly, homodimer. Zn(2+) is required as a cofactor.

The enzyme catalyses Endonucleolytic cleavage of RNA, removing extra 3' nucleotides from tRNA precursor, generating 3' termini of tRNAs. A 3'-hydroxy group is left at the tRNA terminus and a 5'-phosphoryl group is left at the trailer molecule.. In terms of biological role, zinc phosphodiesterase, which displays some tRNA 3'-processing endonuclease activity. Probably involved in tRNA maturation, by removing a 3'-trailer from precursor tRNA. The chain is Ribonuclease Z from Chlamydia trachomatis serovar L2 (strain ATCC VR-902B / DSM 19102 / 434/Bu).